Here is a 766-residue protein sequence, read N- to C-terminus: Probable serine/threonine-protein kinase KKQ8 (766 aa).

Disordered regions lie at residues 1-165, 201-240, 277-297, 362-384, and 417-437; these read MPEH…DTSS, GHYA…AAQL, SDAN…LDLP, TRSH…DDPS, and AAKN…AGVQ. Positions 14–25 are enriched in low complexity; sequence RSLSLGSSMRSL. Positions 49-64 are enriched in basic and acidic residues; the sequence is VDIRVDTASASREHTP. Residues 94 to 120 are compositionally biased toward polar residues; sequence LTPTNSNPQSKSGSPVSQNTSQESLIT. Positions 127 to 137 are enriched in basic and acidic residues; that stretch reads EDYRPSKDSRR. Composition is skewed to polar residues over residues 140–165 and 214–223; these read RNAS…DTSS and PTSSRVPSRS. The segment covering 288–297 has biased composition (basic and acidic residues); that stretch reads SKNDGHLDLP. The segment covering 372 to 382 has biased composition (acidic residues); it reads DSSDDDEELDD. A compositionally biased stretch (basic residues) spans 419-430; it reads KNKHNQSSKHRT. The Protein kinase domain occupies 449–752; it reads GKCVAVVGHG…IDKLLQTGWM (304 aa). ATP contacts are provided by residues 455 to 463 and Lys493; that span reads VGHGAYGVV. Catalysis depends on Asp603, which acts as the Proton acceptor.

It belongs to the protein kinase superfamily. CAMK Ser/Thr protein kinase family. NPR/HAL subfamily. HAL5 sub-subfamily.

The protein localises to the cytoplasm. It catalyses the reaction L-seryl-[protein] + ATP = O-phospho-L-seryl-[protein] + ADP + H(+). The enzyme catalyses L-threonyl-[protein] + ATP = O-phospho-L-threonyl-[protein] + ADP + H(+). The sequence is that of Probable serine/threonine-protein kinase KKQ8 (KKQ8) from Candida glabrata (strain ATCC 2001 / BCRC 20586 / JCM 3761 / NBRC 0622 / NRRL Y-65 / CBS 138) (Yeast).